The chain runs to 299 residues: ATP phosphoribosyltransferase (299 aa).

It belongs to the ATP phosphoribosyltransferase family. Long subfamily. In terms of assembly, equilibrium between an active dimeric form, an inactive hexameric form and higher aggregates. Interconversion between the various forms is largely reversible and is influenced by the natural substrates and inhibitors of the enzyme. Mg(2+) is required as a cofactor.

It localises to the cytoplasm. It carries out the reaction 1-(5-phospho-beta-D-ribosyl)-ATP + diphosphate = 5-phospho-alpha-D-ribose 1-diphosphate + ATP. Its pathway is amino-acid biosynthesis; L-histidine biosynthesis; L-histidine from 5-phospho-alpha-D-ribose 1-diphosphate: step 1/9. Its activity is regulated as follows. Feedback inhibited by histidine. Catalyzes the condensation of ATP and 5-phosphoribose 1-diphosphate to form N'-(5'-phosphoribosyl)-ATP (PR-ATP). Has a crucial role in the pathway because the rate of histidine biosynthesis seems to be controlled primarily by regulation of HisG enzymatic activity. The polypeptide is ATP phosphoribosyltransferase (Salmonella enteritidis PT4 (strain P125109)).